The sequence spans 416 residues: Multifunctional CCA protein (416 aa).

ATP is bound by residues Gly8 and Arg11. Residues Gly8 and Arg11 each contribute to the CTP site. Mg(2+) contacts are provided by Asp21 and Asp23. Positions 91, 137, and 140 each coordinate ATP. CTP contacts are provided by Arg91, Arg137, and Arg140. The HD domain maps to 228 to 329 (TGVHTLMVLA…VKIFDKADFW (102 aa)).

The protein belongs to the tRNA nucleotidyltransferase/poly(A) polymerase family. Bacterial CCA-adding enzyme type 1 subfamily. Monomer. Can also form homodimers and oligomers. Requires Mg(2+) as cofactor. The cofactor is Ni(2+).

The enzyme catalyses a tRNA precursor + 2 CTP + ATP = a tRNA with a 3' CCA end + 3 diphosphate. It catalyses the reaction a tRNA with a 3' CCA end + 2 CTP + ATP = a tRNA with a 3' CCACCA end + 3 diphosphate. Its function is as follows. Catalyzes the addition and repair of the essential 3'-terminal CCA sequence in tRNAs without using a nucleic acid template. Adds these three nucleotides in the order of C, C, and A to the tRNA nucleotide-73, using CTP and ATP as substrates and producing inorganic pyrophosphate. tRNA 3'-terminal CCA addition is required both for tRNA processing and repair. Also involved in tRNA surveillance by mediating tandem CCA addition to generate a CCACCA at the 3' terminus of unstable tRNAs. While stable tRNAs receive only 3'-terminal CCA, unstable tRNAs are marked with CCACCA and rapidly degraded. In Shewanella baltica (strain OS195), this protein is Multifunctional CCA protein.